A 671-amino-acid polypeptide reads, in one-letter code: tRNA 5-methylaminomethyl-2-thiouridine biosynthesis bifunctional protein MnmC (671 aa).

Positions 1–245 are tRNA (mnm(5)s(2)U34)-methyltransferase; it reads MVNVMNTLSF…KREMLWGEKP (245 aa). The tract at residues 272-671 is FAD-dependent cmnm(5)s(2)U34 oxidoreductase; the sequence is VGGGVASLFV…RKLLKGSKVE (400 aa).

The protein in the N-terminal section; belongs to the methyltransferase superfamily. tRNA (mnm(5)s(2)U34)-methyltransferase family. It in the C-terminal section; belongs to the DAO family. The cofactor is FAD.

It localises to the cytoplasm. It catalyses the reaction 5-aminomethyl-2-thiouridine(34) in tRNA + S-adenosyl-L-methionine = 5-methylaminomethyl-2-thiouridine(34) in tRNA + S-adenosyl-L-homocysteine + H(+). Catalyzes the last two steps in the biosynthesis of 5-methylaminomethyl-2-thiouridine (mnm(5)s(2)U) at the wobble position (U34) in tRNA. Catalyzes the FAD-dependent demodification of cmnm(5)s(2)U34 to nm(5)s(2)U34, followed by the transfer of a methyl group from S-adenosyl-L-methionine to nm(5)s(2)U34, to form mnm(5)s(2)U34. This Actinobacillus pleuropneumoniae serotype 5b (strain L20) protein is tRNA 5-methylaminomethyl-2-thiouridine biosynthesis bifunctional protein MnmC.